The following is a 349-amino-acid chain: Protein-glutamate methylesterase/protein-glutamine glutaminase (349 aa).

The 118-residue stretch at 5 to 122 folds into the Response regulatory domain; the sequence is RVLCVDDSAL…REGMLAYSEL (118 aa). Position 56 is a 4-aspartylphosphate (Asp56). The region spanning 152-344 is the CheB-type methylesterase domain; the sequence is LLSSEKLIAI…QRMLAQISSG (193 aa). Residues Ser164, His190, and Asp286 contribute to the active site.

This sequence belongs to the CheB family. Post-translationally, phosphorylated by CheA. Phosphorylation of the N-terminal regulatory domain activates the methylesterase activity.

It is found in the cytoplasm. The enzyme catalyses [protein]-L-glutamate 5-O-methyl ester + H2O = L-glutamyl-[protein] + methanol + H(+). The catalysed reaction is L-glutaminyl-[protein] + H2O = L-glutamyl-[protein] + NH4(+). Its function is as follows. Involved in chemotaxis. Part of a chemotaxis signal transduction system that modulates chemotaxis in response to various stimuli. Catalyzes the demethylation of specific methylglutamate residues introduced into the chemoreceptors (methyl-accepting chemotaxis proteins or MCP) by CheR. Also mediates the irreversible deamidation of specific glutamine residues to glutamic acid. The chain is Protein-glutamate methylesterase/protein-glutamine glutaminase from Yersinia pestis bv. Antiqua (strain Antiqua).